The sequence spans 874 residues: Alanine--tRNA ligase (874 aa).

Zn(2+) is bound by residues His562, His566, Cys665, and His669.

It belongs to the class-II aminoacyl-tRNA synthetase family. The cofactor is Zn(2+).

The protein resides in the cytoplasm. The enzyme catalyses tRNA(Ala) + L-alanine + ATP = L-alanyl-tRNA(Ala) + AMP + diphosphate. Functionally, catalyzes the attachment of alanine to tRNA(Ala) in a two-step reaction: alanine is first activated by ATP to form Ala-AMP and then transferred to the acceptor end of tRNA(Ala). Also edits incorrectly charged Ser-tRNA(Ala) and Gly-tRNA(Ala) via its editing domain. This chain is Alanine--tRNA ligase, found in Pseudomonas paraeruginosa (strain DSM 24068 / PA7) (Pseudomonas aeruginosa (strain PA7)).